A 189-amino-acid chain; its full sequence is Small ribosomal subunit protein uS5 (189 aa).

The S5 DRBM domain maps to 27–90; it reads FEERLLEAAR…EDAKKKTIRV (64 aa).

Belongs to the universal ribosomal protein uS5 family. In terms of assembly, part of the 30S ribosomal subunit. Contacts proteins S4 and S8.

In terms of biological role, with S4 and S12 plays an important role in translational accuracy. Its function is as follows. Located at the back of the 30S subunit body where it stabilizes the conformation of the head with respect to the body. The polypeptide is Small ribosomal subunit protein uS5 (Hydrogenobaculum sp. (strain Y04AAS1)).